A 1117-amino-acid polypeptide reads, in one-letter code: ATP-dependent RNA helicase mtr4 (1117 aa).

The disordered stretch occupies residues 19–86; it reads KSLKEESKNS…DNQDLIPNND (68 aa). Residues 65-79 show a composition bias toward basic and acidic residues; the sequence is SATKRAKIENLKDNQ. The region spanning 207–363 is the Helicase ATP-binding domain; it reads IACIERQESV…WITKIHRQPC (157 aa). 220 to 227 lines the ATP pocket; that stretch reads AHTSAGKT. The short motif at 311–314 is the DEIH box element; that stretch reads DEIH. The disordered stretch occupies residues 414 to 433; that stretch reads GDDPAAMATKGNAKKGKTGK. The Helicase C-terminal domain occupies 441 to 642; sequence DIYKIVKMIM…LSYNMILNLL (202 aa).

It belongs to the helicase family. SKI2 subfamily. Component of the TRAMP complex composed of at least cid14, mtr4, and air1.

Its subcellular location is the nucleus. Its function is as follows. Component of the TRAMP complex which has a poly(A) RNA polymerase activity and is involved in a post-transcriptional quality control mechanism limiting inappropriate expression of genetic information. Polyadenylation is required for the degradative activity of the exosome on several of its nuclear RNA substrates. Required for heterochromatic gene silencing at centromeric repeats by either exosome- or RNAi-mediated degradation of heterochromatic transcripts. This chain is ATP-dependent RNA helicase mtr4 (mtr4), found in Schizosaccharomyces pombe (strain 972 / ATCC 24843) (Fission yeast).